The primary structure comprises 121 residues: Small ribosomal subunit protein uS13 (121 aa).

Residues H91 to K121 are disordered.

It belongs to the universal ribosomal protein uS13 family. In terms of assembly, part of the 30S ribosomal subunit. Forms a loose heterodimer with protein S19. Forms two bridges to the 50S subunit in the 70S ribosome.

In terms of biological role, located at the top of the head of the 30S subunit, it contacts several helices of the 16S rRNA. In the 70S ribosome it contacts the 23S rRNA (bridge B1a) and protein L5 of the 50S subunit (bridge B1b), connecting the 2 subunits; these bridges are implicated in subunit movement. Contacts the tRNAs in the A and P-sites. The polypeptide is Small ribosomal subunit protein uS13 (Staphylococcus aureus (strain Mu3 / ATCC 700698)).